The primary structure comprises 216 residues: Large ribosomal subunit protein bL25 (216 aa).

A disordered region spans residues 184–216 (VPPTSDVEEEEGDEDLEEDVEETAAEEEEGVEE). A compositionally biased stretch (acidic residues) spans 189 to 216 (DVEEEEGDEDLEEDVEETAAEEEEGVEE).

The protein belongs to the bacterial ribosomal protein bL25 family. CTC subfamily. Part of the 50S ribosomal subunit; part of the 5S rRNA/L5/L18/L25 subcomplex. Contacts the 5S rRNA. Binds to the 5S rRNA independently of L5 and L18.

Its function is as follows. This is one of the proteins that binds to the 5S RNA in the ribosome where it forms part of the central protuberance. The sequence is that of Large ribosomal subunit protein bL25 from Desulforapulum autotrophicum (strain ATCC 43914 / DSM 3382 / VKM B-1955 / HRM2) (Desulfobacterium autotrophicum).